Here is a 336-residue protein sequence, read N- to C-terminus: tRNA N6-adenosine threonylcarbamoyltransferase (336 aa).

Residues His112 and His116 each coordinate Fe cation. Substrate contacts are provided by residues 136–140, Asp169, Gly182, and Asn276; that span reads LVSGG. Asp304 is a binding site for Fe cation.

Belongs to the KAE1 / TsaD family. Fe(2+) is required as a cofactor.

The protein localises to the cytoplasm. The catalysed reaction is L-threonylcarbamoyladenylate + adenosine(37) in tRNA = N(6)-L-threonylcarbamoyladenosine(37) in tRNA + AMP + H(+). Its function is as follows. Required for the formation of a threonylcarbamoyl group on adenosine at position 37 (t(6)A37) in tRNAs that read codons beginning with adenine. Is involved in the transfer of the threonylcarbamoyl moiety of threonylcarbamoyl-AMP (TC-AMP) to the N6 group of A37, together with TsaE and TsaB. TsaD likely plays a direct catalytic role in this reaction. This Francisella tularensis subsp. novicida (strain U112) protein is tRNA N6-adenosine threonylcarbamoyltransferase.